Reading from the N-terminus, the 101-residue chain is MERPDKAALNALQPPEFRNESSLASTLKTLLFFTALMITVPIGLYFTTKSYIFEGALGMSNRDSYFYAAIVAVVAVHVVLALFVYVAWNEGSRQWREGKQD.

The Cytoplasmic portion of the chain corresponds to 1–25; that stretch reads MERPDKAALNALQPPEFRNESSLAS. A helical transmembrane segment spans residues 26-46; the sequence is TLKTLLFFTALMITVPIGLYF. The Lumenal portion of the chain corresponds to 47 to 65; the sequence is TTKSYIFEGALGMSNRDSY. Residues 66–86 form a helical membrane-spanning segment; that stretch reads FYAAIVAVVAVHVVLALFVYV. Topologically, residues 87 to 101 are cytoplasmic; that stretch reads AWNEGSRQWREGKQD.

Belongs to the VMA21 family. Associates with the V0 complex of the vacuolar ATPase (V-ATPase). Interacts with ATP6AP2.

The protein localises to the endoplasmic reticulum membrane. It is found in the endoplasmic reticulum-Golgi intermediate compartment membrane. Its subcellular location is the cytoplasmic vesicle. It localises to the COPII-coated vesicle membrane. Functionally, required for the assembly of the V0 complex of the vacuolar ATPase (V-ATPase) in the endoplasmic reticulum. In Homo sapiens (Human), this protein is Vacuolar ATPase assembly integral membrane protein VMA21.